The following is a 603-amino-acid chain: Outer envelope protein 64, mitochondrial (603 aa).

At Ser2 the chain carries N-acetylserine. The chain crosses the membrane as a helical span at residues 16-32; it reads KVWVVIGVTVAGIVILA. TPR repeat units lie at residues 488–521, 523–555, and 556–589; these read SEVM…NGAN, TYYC…DKKN, and VKAY…EPQN.

In terms of tissue distribution, expressed in roots and flower buds. Detected in leaves.

Its subcellular location is the mitochondrion outer membrane. In terms of biological role, chaperone receptor mediating Hsp90-dependent protein targeting to mitochondria. This Arabidopsis thaliana (Mouse-ear cress) protein is Outer envelope protein 64, mitochondrial (OM64).